Reading from the N-terminus, the 753-residue chain is CCR4-NOT transcription complex subunit 3 (753 aa).

The tract at residues 240 to 534 (ATSPPSHSHM…PPQFSTAPEI (295 aa)) is disordered. Residues 257-268 (SSSTPTSTTSSS) show a composition bias toward low complexity. Basic and acidic residues predominate over residues 284-293 (DDKKRGRSTD). T292 is subject to Phosphothreonine. Over residues 294 to 315 (SEVSQSPAKNGSKPVHSNQHPQ) the composition is skewed to polar residues. S299 is modified (phosphoserine). Positions 317–330 (PAVPPTYPSGPPPA) are enriched in pro residues. Residues 350–376 (PSALGPKASPAPSHNSGTPAPYAQAVA) are compositionally biased toward low complexity. Positions 396–408 (SGGGGGGSGGGGS) are enriched in gly residues. A compositionally biased stretch (polar residues) spans 424-433 (NGATSYSSVV). Residues 441–457 (ALSSSGGNNASSQALGP) show a composition bias toward low complexity. Residues 458 to 467 (PSGPHNPPPS) show a composition bias toward pro residues. Residues 479–491 (GAGGVAPGSGNNS) show a composition bias toward gly residues. At S542 the chain carries Phosphoserine. The tract at residues 661–753 (EFYQRLSTET…YRYLEDRDLQ (93 aa)) is repressor domain.

It belongs to the CNOT2/3/5 family. Component of the CCR4-NOT complex; distinct complexes seem to exist that differ in the participation of probably mutually exclusive catalytic subunits. In the complex interacts directly with CNOT2. Interacts with TIP120B and NANOS2. Interacts with EBF1. Interacts in an RNA-independent manner with BICC1 (via KH domains). As to expression, ubiquitous. Highly expressed in brain, heart, thymus, spleen, kidney, liver, small intestine, lung and peripheral blood leukocytes.

Its subcellular location is the cytoplasm. The protein resides in the nucleus. It is found in the P-body. Component of the CCR4-NOT complex which is one of the major cellular mRNA deadenylases and is linked to various cellular processes including bulk mRNA degradation, miRNA-mediated repression, translational repression during translational initiation and general transcription regulation. Additional complex functions may be a consequence of its influence on mRNA expression. May be involved in metabolic regulation; may be involved in recruitment of the CCR4-NOT complex to deadenylation target mRNAs involved in energy metabolism. Involved in mitotic progression and regulation of the spindle assembly checkpoint by regulating the stability of MAD1L1 mRNA. Can repress transcription and may link the CCR4-NOT complex to transcriptional regulation; the repressive function may involve histone deacetylases. Involved in the maintenance of embryonic stem (ES) cell identity. This is CCR4-NOT transcription complex subunit 3 from Homo sapiens (Human).